The primary structure comprises 839 residues: NT-3 growth factor receptor (839 aa).

A signal peptide spans methionine 1–alanine 31. Intrachain disulfides connect cysteine 32-cysteine 38 and cysteine 36-cysteine 45. At cysteine 32–threonine 429 the chain is on the extracellular side. 2 N-linked (GlcNAc...) asparagine glycosylation sites follow: asparagine 72 and asparagine 79. LRR repeat units follow at residues glycine 104–lysine 125 and histidine 128–threonine 149. N-linked (GlcNAc...) asparagine glycans are attached at residues asparagine 133 and asparagine 163. Residues asparagine 160–leucine 209 enclose the LRRCT domain. 2 disulfides stabilise this stretch: cysteine 164–cysteine 189 and cysteine 166–cysteine 207. 7 N-linked (GlcNAc...) asparagine glycosylation sites follow: asparagine 203, asparagine 218, asparagine 232, asparagine 259, asparagine 267, asparagine 272, and asparagine 294. Ig-like C2-type domains are found at residues proline 210–threonine 300 and serine 309–asparagine 382. Cysteine 231 and cysteine 284 are oxidised to a cystine. Cysteine 320 and cysteine 362 are oxidised to a cystine. N-linked (GlcNAc...) asparagine glycosylation is found at asparagine 375 and asparagine 388. The chain crosses the membrane as a helical span at residues phenylalanine 430–isoleucine 453. Residues asparagine 454–glycine 839 are Cytoplasmic-facing. Serine 493 is modified (phosphoserine). Tyrosine 516 is modified (phosphotyrosine; by autocatalysis). The Protein kinase domain maps to isoleucine 538–glycine 839. ATP is bound by residues leucine 544–valine 552 and lysine 572. The active-site Proton acceptor is the aspartate 679. Phosphotyrosine; by autocatalysis is present on residues tyrosine 705, tyrosine 709, and tyrosine 710.

This sequence belongs to the protein kinase superfamily. Tyr protein kinase family. Insulin receptor subfamily. As to quaternary structure, exists in a dynamic equilibrium between monomeric (low affinity) and dimeric (high affinity) structures. Binds SH2B2. Interacts with SQSTM1 and KIDINS220. Interacts with PTPRS. Interacts with MAPK8IP3/JIP3. In terms of processing, ligand-mediated auto-phosphorylation. As to expression, widely expressed but mainly in nervous tissue. Isoform 2 is expressed at higher levels in adult brain than in fetal brain.

Its subcellular location is the membrane. It catalyses the reaction L-tyrosyl-[protein] + ATP = O-phospho-L-tyrosyl-[protein] + ADP + H(+). In terms of biological role, receptor tyrosine kinase involved in nervous system and probably heart development. Upon binding of its ligand NTF3/neurotrophin-3, NTRK3 autophosphorylates and activates different signaling pathways, including the phosphatidylinositol 3-kinase/AKT and the MAPK pathways, that control cell survival and differentiation. The polypeptide is NT-3 growth factor receptor (NTRK3) (Homo sapiens (Human)).